Consider the following 251-residue polypeptide: Hydroxyacylglutathione hydrolase (251 aa).

Residues H53, H55, D57, H58, H110, D127, and H165 each coordinate Zn(2+).

It belongs to the metallo-beta-lactamase superfamily. Glyoxalase II family. Monomer. Zn(2+) is required as a cofactor.

It catalyses the reaction an S-(2-hydroxyacyl)glutathione + H2O = a 2-hydroxy carboxylate + glutathione + H(+). The protein operates within secondary metabolite metabolism; methylglyoxal degradation; (R)-lactate from methylglyoxal: step 2/2. In terms of biological role, thiolesterase that catalyzes the hydrolysis of S-D-lactoyl-glutathione to form glutathione and D-lactic acid. In Salmonella arizonae (strain ATCC BAA-731 / CDC346-86 / RSK2980), this protein is Hydroxyacylglutathione hydrolase.